A 431-amino-acid chain; its full sequence is 23S rRNA (uracil(1939)-C(5))-methyltransferase RlmD (431 aa).

The TRAM domain maps to 10–68 (RVTTRQIITVKVNDLDSFGQGVARHNGKALFIPGLLPEESAEVIITEDKKQFARARVSR). The [4Fe-4S] cluster site is built by Cys81, Cys87, Cys90, and Cys161. S-adenosyl-L-methionine contacts are provided by Gln264, Phe293, Asn298, Glu314, Asn341, and Asp362. Residue Cys388 is the Nucleophile of the active site.

The protein belongs to the class I-like SAM-binding methyltransferase superfamily. RNA M5U methyltransferase family. RlmD subfamily.

It carries out the reaction uridine(1939) in 23S rRNA + S-adenosyl-L-methionine = 5-methyluridine(1939) in 23S rRNA + S-adenosyl-L-homocysteine + H(+). Functionally, catalyzes the formation of 5-methyl-uridine at position 1939 (m5U1939) in 23S rRNA. This is 23S rRNA (uracil(1939)-C(5))-methyltransferase RlmD from Salmonella typhimurium (strain LT2 / SGSC1412 / ATCC 700720).